The following is a 1050-amino-acid chain: MSDPAGNRPKTEKELKKEAEKAAKLAKFEEKQKKLAEKKAAASDKPVKEAKAKKEQTVEAAEPVDQTPTGQRKKIDGEIPAAYFPGYVESGWYSWWEKEGFFKPEYIDKLNPGSNPADSFTVCIPPPNVTGNLHVGHALATTVEDTITRFNRMHGKRTLFNPGCDHAGIATQVVVEKRLKRERGLTRHDLGRDRFNQEVWHWKNEKGDVIYDQFRKLGASVDWDRAVFTMDPKMCRAVTEAFIRMHESGTIYRSNRLVNWSCALRSAISDIEVDKKELTGSTLIAVPGYDKKIEFGVLNSFAYKIQGSDEEIVVSTTRIETMLGDSGVAVHPDDQRYKHLVGKQCIHPFIPTRNLPIFADSFVEMEFGTGAVKITPAHDHNDYEVGIRQNLPFHNCITDDGLISQGCGEFSGMKRFDARTAVIEALKEKGLYRGKEDNPMVVPTCSRSKDVIEPILKPQWYVKCAHMAEKAVAAVANGDLQIIPEFHKATWNRWLESSRDWCISRQLWWGHRIPAYYISFADGREQPLPEENYWVSARTEQEALAKAAQKFQVPEAEILLKWDEDVLDTWFSSGMWPFAVFGWPDATKDMDLFFPGAVLETGHDILFFWVARMVFMAQELTGKLPFKEILLHAMIRDAHGRKMSKSLGNVIDPLDVIRGISLNDLQAQLLGGNLDEKEIAVAKEGQARDYPDGIPECGVDALRFALLSYTSQGRDINLDVLRVHGYRKFCNKLWQVVRFALARISDKPEQKPTFEINLKSATPTDLWILSRLAKAVKETNEALKAYNFTQATTVTYNFWLYDFCDVYVETIKPVLYGDNTTLRQVAISVLHKCIDTGLRLISPLMPFISEELWQRMPRLDDSDYTSPSIIVAQYPLTQKYEKYQNEKLEAAFEFAQELIGKVRSLRADYDLKKTKITMQILSETPEDESMLNDISAVITTLTFSEKVSILNKCESDKIEKGSAHIACGGRCQVYINLTGIIDVPKEIEKLGAKLQKNQISVKKIGDIQSSADYEQKVPVDIRALDQEKKATLEKEIENITAAIAQLKALN.

Positions Glu-37–Thr-57 are enriched in basic and acidic residues. A disordered region spans residues Glu-37 to Arg-72. The short motif at Pro-127–His-137 is the 'HIGH' region element. The 'KMSKS' region signature appears at Lys-642–Ser-646. Lys-645 contributes to the ATP binding site.

Belongs to the class-I aminoacyl-tRNA synthetase family.

It catalyses the reaction tRNA(Val) + L-valine + ATP = L-valyl-tRNA(Val) + AMP + diphosphate. The sequence is that of Valine--tRNA ligase from Caenorhabditis elegans.